An 87-amino-acid polypeptide reads, in one-letter code: Acyl carrier protein 3 (87 aa).

Residues 1 to 79 enclose the Carrier domain; sequence MSNPTVLDQI…DLVTYIEAAL (79 aa). Ser-39 carries the O-(pantetheine 4'-phosphoryl)serine modification.

It belongs to the acyl carrier protein (ACP) family. In terms of processing, 4'-phosphopantetheine is transferred from CoA to a specific serine of apo-ACP by AcpS. This modification is essential for activity because fatty acids are bound in thioester linkage to the sulfhydryl of the prosthetic group.

Its subcellular location is the cytoplasm. The protein operates within lipid metabolism; fatty acid biosynthesis. Carrier of the growing fatty acid chain in fatty acid biosynthesis. This is Acyl carrier protein 3 from Ralstonia nicotianae (strain ATCC BAA-1114 / GMI1000) (Ralstonia solanacearum).